The chain runs to 642 residues: MPIITLPDGSQRHFDNPVSTLEVAQSIGPGLAKATIAGRVNGARVDACDLIEHDASLEIITTKDEVDGLEIVRHSCAHLLGHALKQLYPNAKMAIGPTIDSGFYYDIDLEQSLSQEDLEKIEARMVELAKTKYAVVKKKVSWQEARDTFESRGESYKMEILDENVARDDRPGLYHHEEYIDMCRGPHVPHMGFCQNFKLLNIAGAYWRGNSDNKMLQRIYGTAFHDKKALQAHLTRLEEAAKRDHRKIGKQLDLFHMQQEAPGMVFWHHNGWSIFRDLEIFIRQKLNEYGYQEVKGPLMMDRVLWERSGHWDKYADAMFTTSSENREYAIKPMNCPGHIQIFNQGLKSYRDLPLRMAEFGSCHRNEPSGSLHGIMRVRGFTQDDAHIFCTEDQIQQEVTSCIKMVYDTYTTFGFQNIVVKLSTRPEKRVGSDEIWDKSEQALIDSLKAMDIPFEIQEGEGAFYGPKIEFTLYDCLDRAWQCGTVQLDFNLPTRLGATYVGESNERLIPVMIHRAILGSLERFIGILIEEYAGFFPTWLAPEQAVVVNITDKQADYAHEVAQKLQKCGIRAKADLRNEKIGFKIREHTLKRVPYMLVCGDQEMEAGEIAVRTRKGKDLGKFKLDDFIAHIQAEIASRKLNLEE.

In terms of domain architecture, TGS spans 1-61 (MPIITLPDGS…EHDASLEIIT (61 aa)). Residues 244–535 (DHRKIGKQLD…LIEEYAGFFP (292 aa)) form a catalytic region. Zn(2+) contacts are provided by C335, H386, and H512.

This sequence belongs to the class-II aminoacyl-tRNA synthetase family. In terms of assembly, homodimer. It depends on Zn(2+) as a cofactor.

The protein localises to the cytoplasm. The catalysed reaction is tRNA(Thr) + L-threonine + ATP = L-threonyl-tRNA(Thr) + AMP + diphosphate + H(+). Catalyzes the attachment of threonine to tRNA(Thr) in a two-step reaction: L-threonine is first activated by ATP to form Thr-AMP and then transferred to the acceptor end of tRNA(Thr). Also edits incorrectly charged L-seryl-tRNA(Thr). The sequence is that of Threonine--tRNA ligase from Vibrio cholerae serotype O1 (strain M66-2).